The sequence spans 732 residues: Coagulation factor XIII A chain (732 aa).

A disordered region spans residues 1 to 26 (MSDTPASTFGGRRAVPPNNSNAAEVD). Position 2 is an N-acetylserine (Ser2). The propeptide at 2-38 (SDTPASTFGGRRAVPPNNSNAAEVDLPTEELQGLVPR) is activation peptide. Residues Cys315, His374, and Asp397 contribute to the active site. Residues Asn437, Asp439, Glu486, and Glu491 each contribute to the Ca(2+) site. N-linked (GlcNAc...) asparagine glycosylation is present at Asn614.

Belongs to the transglutaminase superfamily. Transglutaminase family. As to quaternary structure, tetramer of two A chains (F13A1) and two B (F13B) chains. Ca(2+) serves as cofactor. Post-translationally, the activation peptide is released by thrombin.

It localises to the cytoplasm. The protein resides in the secreted. It catalyses the reaction L-glutaminyl-[protein] + L-lysyl-[protein] = [protein]-L-lysyl-N(6)-5-L-glutamyl-[protein] + NH4(+). Functionally, factor XIII is activated by thrombin and calcium ion to a transglutaminase that catalyzes the formation of gamma-glutamyl-epsilon-lysine cross-links between fibrin chains, thus stabilizing the fibrin clot. Also cross-link alpha-2-plasmin inhibitor, or fibronectin, to the alpha chains of fibrin. This Mus musculus (Mouse) protein is Coagulation factor XIII A chain (F13a1).